The following is a 662-amino-acid chain: Methionine--tRNA ligase (662 aa).

The short motif at Tyr14–Ser24 is the 'HIGH' region element. A 'KMSKS' region motif is present at residues Lys308 to Ser312. Residue Lys311 coordinates ATP. A tRNA-binding domain is found at Asp559–Gly662.

This sequence belongs to the class-I aminoacyl-tRNA synthetase family. MetG type 2B subfamily. As to quaternary structure, homodimer.

The protein localises to the cytoplasm. The enzyme catalyses tRNA(Met) + L-methionine + ATP = L-methionyl-tRNA(Met) + AMP + diphosphate. In terms of biological role, is required not only for elongation of protein synthesis but also for the initiation of all mRNA translation through initiator tRNA(fMet) aminoacylation. In Lactococcus lactis subsp. lactis (strain IL1403) (Streptococcus lactis), this protein is Methionine--tRNA ligase (metG).